Here is a 126-residue protein sequence, read N- to C-terminus: Spermidine export protein MdtJ (126 aa).

Transmembrane regions (helical) follow at residues 1–21 (MMIY…GTLS), 32–52 (TGHI…ALAV), 55–75 (VALG…ITVF), and 82–102 (ESLS…IMLV). Residues 104–126 (SGTRKPKKPNSPNRNSGEHHATA) form a disordered region.

This sequence belongs to the drug/metabolite transporter (DMT) superfamily. Small multidrug resistance (SMR) (TC 2.A.7.1) family. MdtJ subfamily. Forms a complex with MdtI.

Its subcellular location is the cell inner membrane. Catalyzes the excretion of spermidine. This Yersinia enterocolitica serotype O:8 / biotype 1B (strain NCTC 13174 / 8081) protein is Spermidine export protein MdtJ.